The primary structure comprises 464 residues: Protein transport protein HofB homolog (464 aa).

264–271 (GPTGSGKS) contributes to the ATP binding site.

This sequence belongs to the GSP E family.

This is Protein transport protein HofB homolog (hofB) from Haemophilus influenzae (strain ATCC 51907 / DSM 11121 / KW20 / Rd).